Here is a 165-residue protein sequence, read N- to C-terminus: Neuritin-like protein (165 aa).

An N-terminal signal peptide occupies residues 1–35 (MMRCCRRRCCCRQPPHALRPLLLLPLVLLPPLAAA). Residue Ala-139 is the site of GPI-anchor amidated alanine attachment. The propeptide at 140-165 (PALPMAPAPPLLAAALALAYLLRPLA) is removed in mature form.

Belongs to the neuritin family.

The protein resides in the cell membrane. The protein is Neuritin-like protein (NRN1L) of Homo sapiens (Human).